Reading from the N-terminus, the 1955-residue chain is Protocadherin-15 (1955 aa).

An N-terminal signal peptide occupies residues 1 to 26 (MFRQFYLWTCLASGIILGSLFEICLG). Residues 27 to 1376 (QYDDDCKLAR…GESLGYTEGA (1350 aa)) lie on the Extracellular side of the membrane. Cysteines 32 and 120 form a disulfide. Cadherin domains are found at residues 40–147 (PATI…SPTF), 148–265 (KHES…GPMF), 278–395 (RPLT…SPYF), 396–509 (TMPS…TPTF), 510–616 (PEIS…PPRF), 617–717 (PQLM…APVF), 719–819 (PYLP…SPVF), 820–926 (TNST…PPVF), 927–1035 (SKRI…IPRF), 1037–1144 (QEEY…PPVF), and 1145–1259 (QKKF…PPTL). Asparagine 52, asparagine 97, and asparagine 201 each carry an N-linked (GlcNAc...) asparagine glycan. N-linked (GlcNAc...) asparagine glycans are attached at residues asparagine 419, asparagine 559, asparagine 662, asparagine 724, asparagine 768, asparagine 821, and asparagine 851. N-linked (GlcNAc...) asparagine glycosylation is found at asparagine 1064, asparagine 1084, and asparagine 1175. The helical transmembrane segment at 1377–1397 (LLALAFIIILCCIPAILVVLV) threads the bilayer. Topologically, residues 1398-1955 (SYRQFKVRQA…KQSHSQSTSL (558 aa)) are cytoplasmic. The segment covering 1426–1444 (VPAPAPVAAPPPPPPPPPG) has biased composition (pro residues). 4 disordered regions span residues 1426–1446 (VPAPAPVAAPPPPPPPPPGAH), 1601–1623 (QGTRQKAENENTGICTNKRGSSN), 1745–1766 (CPLPPPPPISPPSPPPAPAPLA), and 1928–1955 (ITSEQNKGSLNNIVEGTEKQSHSQSTSL). A compositionally biased stretch (polar residues) spans 1928 to 1941 (ITSEQNKGSLNNIV).

In terms of assembly, antiparallel heterodimer with CDH23. Found in a complex with TMIE and LHFPL5. Interacts with LHFPL5/TMHS; this interaction is required for efficient localization to hair bundles. Interacts with MYO7A. Interacts with USH1G; this interaction may recruit USH1G to the plasma membrane. Interacts with TOMT. Isoforms CD1 and CD3 interact with TMC1 (via N-terminus) and TMC2 (via N-terminus). As to expression, expressed in brain, lung, kidney, spleen and testis. Found also in the inner and outer synaptic layers, and the nerve fiber layer in adult and fetal retinas. Found in the supporting cells, outer sulcus cells and spiral ganglion of fetal cochlea. Expressed in cytotoxic tumor-derived T- and NK-cell lines as well as biopsies of nasal NK/T-cell lymphomas. Not detected in normal or in vitro activated peripheral blood cells, CD4 or CD8 lymphocytes or NK cells. Isoform 3 is expressed in brain, heart, cerebellum and kidney. CD1 isoforms, such as isoform 1, have a limited pattern of expression and is detected in testis, retina and cochlea. CD2 isoforms, such as isoforms 4 and 5, are expressed in heart, kidney, thymus, spleen, testis, retina and cochlea. CD3 isoforms, such as isoform 6, are widely expressed.

Its subcellular location is the cell membrane. The protein localises to the secreted. Its function is as follows. Calcium-dependent cell-adhesion protein. Essential for maintenance of normal retinal and cochlear function. The sequence is that of Protocadherin-15 (PCDH15) from Homo sapiens (Human).